The following is a 413-amino-acid chain: L-cysteine:1D-myo-inositol 2-amino-2-deoxy-alpha-D-glucopyranoside ligase (413 aa).

Cys-15 is a Zn(2+) binding site. L-cysteinyl-5'-AMP is bound by residues 15 to 18 (CGIT), Thr-30, and 53 to 55 (NVT). The 'HIGH' region signature appears at 17-27 (ITPYDATHLGH). The 'ERGGDP' region signature appears at 155 to 160 (ERGGDP). Trp-195 lines the L-cysteinyl-5'-AMP pocket. Residue Cys-199 coordinates Zn(2+). Position 217-219 (217-219 (GTD)) interacts with L-cysteinyl-5'-AMP. Residue His-224 participates in Zn(2+) binding. Val-251 contributes to the L-cysteinyl-5'-AMP binding site. Residues 257–261 (KMSKS) carry the 'KMSKS' region motif.

Belongs to the class-I aminoacyl-tRNA synthetase family. MshC subfamily. In terms of assembly, monomer. The cofactor is Zn(2+).

It catalyses the reaction 1D-myo-inositol 2-amino-2-deoxy-alpha-D-glucopyranoside + L-cysteine + ATP = 1D-myo-inositol 2-(L-cysteinylamino)-2-deoxy-alpha-D-glucopyranoside + AMP + diphosphate + H(+). In terms of biological role, catalyzes the ATP-dependent condensation of GlcN-Ins and L-cysteine to form L-Cys-GlcN-Ins. This is L-cysteine:1D-myo-inositol 2-amino-2-deoxy-alpha-D-glucopyranoside ligase from Frankia alni (strain DSM 45986 / CECT 9034 / ACN14a).